The following is a 128-amino-acid chain: Cytochrome c-type biogenesis protein CcmE (128 aa).

The Cytoplasmic segment spans residues 1-8 (MQKIVRNR). Residues 9–29 (LIKIILCFCSTCLGISIILYN) traverse the membrane as a helical; Signal-anchor for type II membrane protein segment. Residues 30–128 (LEKNIIFFFP…KHDENYRPPS (99 aa)) lie on the Periplasmic side of the membrane. Heme is bound by residues H120 and Y124.

Belongs to the CcmE/CycJ family.

Its subcellular location is the cell inner membrane. In terms of biological role, heme chaperone required for the biogenesis of c-type cytochromes. Transiently binds heme delivered by CcmC and transfers the heme to apo-cytochromes in a process facilitated by CcmF and CcmH. The polypeptide is Cytochrome c-type biogenesis protein CcmE (Rickettsia typhi (strain ATCC VR-144 / Wilmington)).